The sequence spans 290 residues: 33 kDa chaperonin (290 aa).

2 disulfide bridges follow: Cys235–Cys237 and Cys268–Cys271.

The protein belongs to the HSP33 family. Under oxidizing conditions two disulfide bonds are formed involving the reactive cysteines. Under reducing conditions zinc is bound to the reactive cysteines and the protein is inactive.

It is found in the cytoplasm. In terms of biological role, redox regulated molecular chaperone. Protects both thermally unfolding and oxidatively damaged proteins from irreversible aggregation. Plays an important role in the bacterial defense system toward oxidative stress. The chain is 33 kDa chaperonin from Streptococcus pneumoniae (strain P1031).